A 1681-amino-acid chain; its full sequence is Probable UDP-glucose:glycoprotein glucosyltransferase A (1681 aa).

The N-terminal stretch at 1 to 25 (MARIFKFFVFLLIVFISNVLLLVES) is a signal peptide. N-linked (GlcNAc...) asparagine glycosylation is found at Asn-81, Asn-148, Asn-174, and Asn-391. The interval 566 to 586 (TKSNNNNNNNNNNNDQNSQTS) is disordered. Positions 569 to 579 (NNNNNNNNNNN) are enriched in low complexity. N-linked (GlcNAc...) asparagine glycans are attached at residues Asn-1233 and Asn-1338. Residues 1346–1657 (LFSSKNDATD…QIELDHQNQL (312 aa)) form a glucosyltransferase region.

The protein belongs to the glycosyltransferase 8 family. Requires Ca(2+) as cofactor. Mn(2+) serves as cofactor.

The protein resides in the endoplasmic reticulum lumen. It localises to the endoplasmic reticulum-Golgi intermediate compartment. Its pathway is protein modification; protein glycosylation. Its function is as follows. Recognizes glycoproteins with minor folding defects. Reglucosylates single N-glycans near the misfolded part of the protein, thus providing quality control for protein folding in the endoplasmic reticulum. The sequence is that of Probable UDP-glucose:glycoprotein glucosyltransferase A (ggtA) from Dictyostelium discoideum (Social amoeba).